A 141-amino-acid chain; its full sequence is MTLNGYLSTDFHIKSPAKKFFQTCIETMDLPKDDVTVEIEEVPLEKKKTTFRIEGFQISEWYKSFKGTITPDMATWQNPDGYKKLEGTMTITHVEDNDCDRAILTVKYEKINSDIKDPGTIMDTFVEFFKEMDEYLVEDFN.

This is an uncharacterized protein from Arabidopsis thaliana (Mouse-ear cress).